The primary structure comprises 144 residues: 3-hydroxyacyl-[acyl-carrier-protein] dehydratase FabZ (144 aa).

The active site involves histidine 48.

The protein belongs to the thioester dehydratase family. FabZ subfamily.

It localises to the cytoplasm. The enzyme catalyses a (3R)-hydroxyacyl-[ACP] = a (2E)-enoyl-[ACP] + H2O. Its function is as follows. Involved in unsaturated fatty acids biosynthesis. Catalyzes the dehydration of short chain beta-hydroxyacyl-ACPs and long chain saturated and unsaturated beta-hydroxyacyl-ACPs. The polypeptide is 3-hydroxyacyl-[acyl-carrier-protein] dehydratase FabZ (Bacillus cytotoxicus (strain DSM 22905 / CIP 110041 / 391-98 / NVH 391-98)).